A 132-amino-acid polypeptide reads, in one-letter code: Phosphoribosyl-AMP cyclohydrolase (132 aa).

A Mg(2+)-binding site is contributed by aspartate 78. Cysteine 79 is a binding site for Zn(2+). Mg(2+) is bound by residues aspartate 80 and aspartate 82. Zn(2+)-binding residues include cysteine 96 and cysteine 103.

This sequence belongs to the PRA-CH family. In terms of assembly, homodimer. Mg(2+) is required as a cofactor. Requires Zn(2+) as cofactor.

The protein resides in the cytoplasm. It catalyses the reaction 1-(5-phospho-beta-D-ribosyl)-5'-AMP + H2O = 1-(5-phospho-beta-D-ribosyl)-5-[(5-phospho-beta-D-ribosylamino)methylideneamino]imidazole-4-carboxamide. The protein operates within amino-acid biosynthesis; L-histidine biosynthesis; L-histidine from 5-phospho-alpha-D-ribose 1-diphosphate: step 3/9. Its function is as follows. Catalyzes the hydrolysis of the adenine ring of phosphoribosyl-AMP. The polypeptide is Phosphoribosyl-AMP cyclohydrolase (Nitrosococcus oceani (strain ATCC 19707 / BCRC 17464 / JCM 30415 / NCIMB 11848 / C-107)).